The following is a 529-amino-acid chain: Peptide chain release factor 3 (529 aa).

The tr-type G domain maps to 11–280 (AKRRTFAIIS…GLVAWAPAPM (270 aa)). GTP is bound by residues 20 to 27 (SHPDAGKT), 88 to 92 (DTPGH), and 142 to 145 (NKLD).

This sequence belongs to the TRAFAC class translation factor GTPase superfamily. Classic translation factor GTPase family. PrfC subfamily.

It localises to the cytoplasm. In terms of biological role, increases the formation of ribosomal termination complexes and stimulates activities of RF-1 and RF-2. It binds guanine nucleotides and has strong preference for UGA stop codons. It may interact directly with the ribosome. The stimulation of RF-1 and RF-2 is significantly reduced by GTP and GDP, but not by GMP. In Edwardsiella ictaluri (strain 93-146), this protein is Peptide chain release factor 3.